We begin with the raw amino-acid sequence, 691 residues long: MKEIQAIYVDLKKLRNIGIMAHIDAGKTTTTERILFYTGRKHNIGSVDDGTATMDWMVQEKERGITIVSAATTCMWKDHRINIIDTPGHVDFTIEVERALRVLDGAVAVFDAAAGVEPQSETVWRQADKYNVPRIAFMNKMDKLGADFEMAVQTMVDRLKANPIPVQMPMGAEDSFEGVIDLIEMKAIRWLNENGTEMVYEEIPEKYRAKAEEMREDLLEKVAELDDEIMMLYLEGEEISNDLIKKALRKATIENKATPVFCGSAKMNRGVQPLLDGILEYLPSPLDMPPVRGWNQNGEEVQIKPSEDEPFTALAFKIQADPYVGKLTFFRVYSGRLEKGSYVYNSTKGKKERISRLIFMHADKREDVEYVRAGDIVAAIGLKDTKTGDTLCDEKRPVILEKMEFPEPVISIAIEPETKNDQDKLSKALTLLSDEDPSFRAYVDHETGETIISGMGELHLEIIVDRLKREFNTKVRVGQPQVAYRETIQEPAEAEGKYIRQSGGRGQYGHVIMRFEPIDLSKTFEFEDRIVGGVIPKEYIPAVEEGVREAAQSGVLAGYPMVGIKAILLDGSYHEVDSSEMAFKIAASMAFKEAVKKAKPILLEPIMRVEVTTPEEYMGNIIADLNSRRAHVETLESRGHLRIIKALVPLSEMFGYATDLRSLSQGRATYTMVLERYAKVPDKLAEKIISK.

Residues 12–286 enclose the tr-type G domain; it reads KKLRNIGIMA…GILEYLPSPL (275 aa). GTP-binding positions include 21-28, 85-89, and 139-142; these read AHIDAGKT, DTPGH, and NKMD.

It belongs to the TRAFAC class translation factor GTPase superfamily. Classic translation factor GTPase family. EF-G/EF-2 subfamily.

Its subcellular location is the cytoplasm. Functionally, catalyzes the GTP-dependent ribosomal translocation step during translation elongation. During this step, the ribosome changes from the pre-translocational (PRE) to the post-translocational (POST) state as the newly formed A-site-bound peptidyl-tRNA and P-site-bound deacylated tRNA move to the P and E sites, respectively. Catalyzes the coordinated movement of the two tRNA molecules, the mRNA and conformational changes in the ribosome. In Thermosipho africanus (strain TCF52B), this protein is Elongation factor G.